Reading from the N-terminus, the 421-residue chain is Fasciclin-like arabinogalactan protein ARB_02922 (421 aa).

A signal peptide spans 1 to 17 (MLLYYILVALWATVTYA). FAS1 domains lie at 18-167 (KSFS…DRPL) and 169-296 (LPQS…SDVL). N-linked (GlcNAc...) asparagine glycans are attached at residues Asn-52, Asn-75, Asn-80, Asn-120, Asn-145, Asn-181, Asn-223, and Asn-300. The disordered stretch occupies residues 300 to 401 (NDTAKPVPNA…NTPQPGAAAT (102 aa)). Gly residues-rich tracts occupy residues 344 to 356 (TSGG…GGGE) and 372 to 387 (SGGG…GGPG). A compositionally biased stretch (low complexity) spans 388–401 (PTATNTPQPGAAAT). Residue Gly-397 is the site of GPI-anchor amidated glycine attachment. Residues 398 to 421 (AAATERAKAGLAAVVGLGVVLINA) constitute a propeptide, removed in mature form.

It belongs to the fasciclin-like AGP family.

Its subcellular location is the cell membrane. May be a cell surface adhesion protein. This chain is Fasciclin-like arabinogalactan protein ARB_02922, found in Arthroderma benhamiae (strain ATCC MYA-4681 / CBS 112371) (Trichophyton mentagrophytes).